Consider the following 245-residue polypeptide: uncharacterized protein (245 aa).

A coiled-coil region spans residues 33–176; sequence QRAAYQQVQA…SSQRDMLTAT (144 aa).

This is an uncharacterized protein from Mycobacterium tuberculosis (strain CDC 1551 / Oshkosh).